Here is a 1404-residue protein sequence, read N- to C-terminus: G8 domain-containing protein DDB_G0286897 (1404 aa).

A signal peptide spans 1-20; sequence MNYFKYFIFVVFLFFTIVKC. Helical transmembrane passes span 97–117 and 128–148; these read LVGF…GLFA and IIIL…IQSI. N-linked (GlcNAc...) asparagine glycans are attached at residues asparagine 352, asparagine 365, asparagine 413, asparagine 481, asparagine 639, asparagine 838, asparagine 979, asparagine 1003, asparagine 1017, asparagine 1253, and asparagine 1334. The G8 domain maps to 553–679; that stretch reads STWASGFVPL…YHNTWTKLST (127 aa).

This sequence belongs to the comF family.

It is found in the membrane. This chain is G8 domain-containing protein DDB_G0286897, found in Dictyostelium discoideum (Social amoeba).